We begin with the raw amino-acid sequence, 51 residues long: Light-harvesting protein B800/850/890 beta-2 chain (51 aa).

The Cytoplasmic portion of the chain corresponds to 1 to 17 (ADEMRNVSDEEAKEFHA). Positions 16 and 34 each coordinate a bacteriochlorophyll. Residues 18–40 (MFSQAFTVYVGVAVVAHILAWAW) form a helical membrane-spanning segment. At 41–51 (RPWIPGDEGFG) the chain is on the periplasmic side.

The protein belongs to the antenna complex beta subunit family. As to quaternary structure, the core complex is formed by different alpha and beta chains, binding bacteriochlorophyll molecules, and arranged most probably in tetrameric structures disposed around the reaction center. The non-pigmented gamma chains may constitute additional components.

The protein resides in the cell inner membrane. In terms of biological role, antenna complexes are light-harvesting systems, which transfer the excitation energy to the reaction centers. The chain is Light-harvesting protein B800/850/890 beta-2 chain from Halorhodospira halophila (strain DSM 244 / SL1) (Ectothiorhodospira halophila (strain DSM 244 / SL1)).